The sequence spans 229 residues: RNA pyrophosphohydrolase (229 aa).

The Nudix hydrolase domain occupies 6–149; the sequence is GFRPNVGIIL…KRGVYEMALT (144 aa). A Nudix box motif is present at residues 38–59; sequence GGIDRGETPEQAMFRELHEEVG. The interval 168-229 is disordered; that stretch reads SGMRPREAHE…QVLHPDPGKA (62 aa).

It belongs to the Nudix hydrolase family. RppH subfamily. Requires a divalent metal cation as cofactor.

In terms of biological role, accelerates the degradation of transcripts by removing pyrophosphate from the 5'-end of triphosphorylated RNA, leading to a more labile monophosphorylated state that can stimulate subsequent ribonuclease cleavage. This Delftia acidovorans (strain DSM 14801 / SPH-1) protein is RNA pyrophosphohydrolase.